Here is a 556-residue protein sequence, read N- to C-terminus: Trigger factor (556 aa).

Residues 169-255 enclose the PPIase FKBP-type domain; that stretch reads GDVVVIDFAA…LREIKAKELP (87 aa). Residues 438–452 show a composition bias toward polar residues; sequence VDSEGNPTQAPTSLA. The segment at 438–556 is disordered; sequence VDSEGNPTQA…KPSKKDKKGK (119 aa). Acidic residues predominate over residues 461-472; sequence PEAEFEADEPEA. 2 stretches are compositionally biased toward low complexity: residues 486-503 and 511-526; these read ETAT…AEAE and EASP…AEAT.

Belongs to the FKBP-type PPIase family. Tig subfamily.

The protein localises to the cytoplasm. The catalysed reaction is [protein]-peptidylproline (omega=180) = [protein]-peptidylproline (omega=0). Functionally, involved in protein export. Acts as a chaperone by maintaining the newly synthesized protein in an open conformation. Functions as a peptidyl-prolyl cis-trans isomerase. The sequence is that of Trigger factor from Synechococcus sp. (strain JA-2-3B'a(2-13)) (Cyanobacteria bacterium Yellowstone B-Prime).